The following is a 256-amino-acid chain: Imidazole glycerol phosphate synthase subunit HisF (256 aa).

Active-site residues include Asp-13 and Asp-132.

Belongs to the HisA/HisF family. As to quaternary structure, heterodimer of HisH and HisF.

It is found in the cytoplasm. The enzyme catalyses 5-[(5-phospho-1-deoxy-D-ribulos-1-ylimino)methylamino]-1-(5-phospho-beta-D-ribosyl)imidazole-4-carboxamide + L-glutamine = D-erythro-1-(imidazol-4-yl)glycerol 3-phosphate + 5-amino-1-(5-phospho-beta-D-ribosyl)imidazole-4-carboxamide + L-glutamate + H(+). It participates in amino-acid biosynthesis; L-histidine biosynthesis; L-histidine from 5-phospho-alpha-D-ribose 1-diphosphate: step 5/9. IGPS catalyzes the conversion of PRFAR and glutamine to IGP, AICAR and glutamate. The HisF subunit catalyzes the cyclization activity that produces IGP and AICAR from PRFAR using the ammonia provided by the HisH subunit. The chain is Imidazole glycerol phosphate synthase subunit HisF from Leptospira borgpetersenii serovar Hardjo-bovis (strain JB197).